The following is a 2696-amino-acid chain: Histone-lysine N-methyltransferase, H3 lysine-36 specific (2696 aa).

At Ser117 the chain carries Phosphoserine. 2 disordered regions span residues 207-252 (MGSE…EKAA) and 281-311 (DPDS…PFCQ). Residues 236-248 (QKNKQRNEVDGSN) show a composition bias toward basic and acidic residues. Polar residues-rich tracts occupy residues 281–290 (DPDSSTSTLG) and 297–306 (GTSSSSTSQE). The PWWP 1 domain occupies 323–388 (VGDLIWAKFK…AGKAIVMFEG (66 aa)). Phosphoserine is present on residues Ser483 and Ser486. The disordered stretch occupies residues 487 to 514 (ADEKEKPCAKSRARKSSDNPKRTSVKKG). At Ser766 the chain carries Phosphoserine. Residues 872–891 (LGEDVSDSGTSKPSKPLLFS) form a disordered region. Residue Lys906 forms a Glycyl lysine isopeptide (Lys-Gly) (interchain with G-Cter in SUMO2) linkage. Disordered stretches follow at residues 936 to 1035 (YRSP…DAFS), 1067 to 1093 (VLQG…PLQI), 1112 to 1134 (SKVK…NGKG), 1243 to 1272 (SIGD…SEKK), 1294 to 1344 (PKKK…EPPV), 1382 to 1428 (SPRP…KKGD), and 1480 to 1534 (KMQC…MQGE). The span at 948-961 (SPVGVSKVLVSGGS) shows a compositional bias: low complexity. Over residues 971–982 (GTQNSANPSPSG) the composition is skewed to polar residues. 3 stretches are compositionally biased toward basic and acidic residues: residues 1000-1017 (SDKR…DCVT), 1070-1090 (GDRE…KEDP), and 1112-1124 (SKVK…KISE). Basic and acidic residues predominate over residues 1300 to 1314 (KVQEQVHKVSSRCEE). The span at 1323–1337 (SSAQNKQVDENSLIS) shows a compositional bias: polar residues. Lys1339 participates in a covalent cross-link: Glycyl lysine isopeptide (Lys-Gly) (interchain with G-Cter in SUMO2). Position 1510 is a phosphoserine (Ser1510). Over residues 1513–1523 (ETVEEGVEHDP) the composition is skewed to basic and acidic residues. PHD-type zinc fingers lie at residues 1543 to 1589 (ENVC…CRTG), 1590 to 1646 (IHTC…CHAA), and 1707 to 1751 (VSWC…CKAG). Residues 1756-1818 (YREIVWVKVG…QARVFPYMEG (63 aa)) enclose the PWWP 2 domain. In terms of domain architecture, AWS spans 1890-1940 (SEIPRCNCKATDENPCGIDSECINRMLLYECHPTVCPAGGRCQNQCFSKRQ). In terms of domain architecture, SET spans 1942–2059 (PEVEIFRTLQ…AGTELTFNYN (118 aa)). Residues 1952–1954 (RGW), 1994–1997 (TNFY), 2020–2021 (NH), Asn2065, and Lys2071 contribute to the S-adenosyl-L-methionine site. The segment at 2060–2066 (LECLGNG) is inhibits enzyme activity in the absence of bound histone. Residues 2066–2082 (GKTVCKCGAPNCSGFLG) enclose the Post-SET domain. Positions 2091 to 2111 (ATEEKSKKFKKKQQGKRRTQG) are disordered. A compositionally biased stretch (basic residues) spans 2097–2108 (KKFKKKQQGKRR). A PHD-type 4; atypical zinc finger spans residues 2118 to 2165 (EDECFSCGDAGQLVSCKKPGCPKVYHADCLNLTKRPAGKWECPWHQCD). Residues 2213 to 2422 (LEPGEIREYV…SLSQRLPPPE (210 aa)) are disordered. Over residues 2222–2232 (VPPPVPLPPGP) the composition is skewed to pro residues. Residues 2281-2298 (RPLERTDSRPQPLDKVRD) are compositionally biased toward basic and acidic residues. A compositionally biased stretch (polar residues) spans 2303-2314 (GTKSQSLVSSQR). A compositionally biased stretch (low complexity) spans 2330-2348 (SDKPSPVTSPSSSPSVRSQ). Ser2369 is subject to Phosphoserine. Composition is skewed to polar residues over residues 2371-2381 (RPQSLEKTSVP) and 2394-2404 (ITSSPKPQTSD). A Phosphothreonine modification is found at Thr2462. Disordered stretches follow at residues 2464-2499 (RQKE…GLGH), 2553-2575 (TQAS…QSPG), 2595-2616 (KSGQ…EEKK), and 2665-2696 (LGRG…SEQK). Ser2471 carries the phosphoserine modification. Lys2616 is covalently cross-linked (Glycyl lysine isopeptide (Lys-Gly) (interchain with G-Cter in SUMO2)). A compositionally biased stretch (polar residues) spans 2674–2686 (EQNTLPALNQAPS).

The protein belongs to the class V-like SAM-binding methyltransferase superfamily. As to quaternary structure, interacts with the ligand-binding domains of RARA and THRA in the absence of ligand; in the presence of ligand the interaction is severely disrupted but some binding still occurs. Interacts with the ligand-binding domains of RXRA and ESRRA only in the presence of ligand. Interacts with ZNF496. Interacts with AR DNA- and ligand-binding domains. In terms of tissue distribution, expressed in the fetal/adult brain, kidney, skeletal muscle, spleen, and the thymus, and faintly in the lung.

The protein localises to the nucleus. It localises to the chromosome. The enzyme catalyses L-lysyl(36)-[histone H3] + 2 S-adenosyl-L-methionine = N(6),N(6)-dimethyl-L-lysyl(36)-[histone H3] + 2 S-adenosyl-L-homocysteine + 2 H(+). In terms of biological role, histone methyltransferase that dimethylates Lys-36 of histone H3 (H3K36me2). Transcriptional intermediary factor capable of both negatively or positively influencing transcription, depending on the cellular context. The protein is Histone-lysine N-methyltransferase, H3 lysine-36 specific (NSD1) of Homo sapiens (Human).